A 130-amino-acid chain; its full sequence is Anti-adapter protein IraD (130 aa).

The protein belongs to the GpW/Gp25 family. IraD subfamily. As to quaternary structure, interacts with RssB.

The protein resides in the cytoplasm. In terms of biological role, inhibits RpoS proteolysis by regulating RssB activity, thereby increasing the stability of the sigma stress factor RpoS during oxidative stress. Its effect on RpoS stability is due to its interaction with RssB, which probably blocks the interaction of RssB with RpoS, and the consequent delivery of the RssB-RpoS complex to the ClpXP protein degradation pathway. The chain is Anti-adapter protein IraD from Shigella boydii serotype 4 (strain Sb227).